The following is a 441-amino-acid chain: Probable D-serine dehydratase (441 aa).

An N6-(pyridoxal phosphate)lysine modification is found at K117.

It belongs to the serine/threonine dehydratase family. DsdA subfamily. Pyridoxal 5'-phosphate serves as cofactor.

The enzyme catalyses D-serine = pyruvate + NH4(+). This Acinetobacter baylyi (strain ATCC 33305 / BD413 / ADP1) protein is Probable D-serine dehydratase.